We begin with the raw amino-acid sequence, 518 residues long: MTGPVNPDDRRSFSSRTPVNENPDGVQYRRGFVTRHQVSGWRFVMRRIASGVALHDTRMLVDPLRTQSRAVLTGALILVTGLVGCFIFSLFRPGGVPGNNAILADRSTSALYVRVGEQLHPVLNLTSARLISGSPDNPTMVKTSEIDKFPRGNLLGIPGAPERMVQNAATDAEWTVCDAVGGANPGVTVIAGPLGADGERAAPLPPDHAVLVHSDAEPNPGDWLLWDGKRSPIDLADRAVTDALGLGGQALAPRPIAAGLFNAVPAAPALTAPVIPDAGAAPQFELSLPVPVGAVVVAYDADNTARYYAVLSDGLQPISPVLAAILRNTDSHGFAQPPRLGPDEVARTPMSRGLDTSAYPDNPVTLVEASAHPVTCAHWTKPSDAAESSLSVLSGAVLPLAEGLHTVDLVGAGAGGAANRVALTPGTGYFVQTVGAEPGSPTAGSMFWVSDTGVRYGIDTAEDDKVVAALGLSTSPLPVPWSVLSQFAAGPALSRGDALVAHDAVSTNPNSARMEASR.

A disordered region spans residues 1–26 (MTGPVNPDDRRSFSSRTPVNENPDGV). The helical transmembrane segment at 71-91 (VLTGALILVTGLVGCFIFSLF) threads the bilayer.

This sequence belongs to the EccB family. In terms of assembly, part of the ESX-3 / type VII secretion system (T7SS), which is composed of cytosolic and membrane components. The ESX-3 membrane complex is composed of EccB3, EccC3, EccD3 and EccE3.

The protein localises to the cell inner membrane. Its function is as follows. An ATPase. Part of the ESX-3 specialized secretion system, which is required for siderophore-mediated iron acquisition and for the secretion of EsxH and EsxG. The chain is ESX-3 secretion system ATPase EccB3 from Mycolicibacterium smegmatis (strain ATCC 700084 / mc(2)155) (Mycobacterium smegmatis).